Reading from the N-terminus, the 804-residue chain is Lon protease (804 aa).

The segment at 1 to 23 is disordered; it reads MSADSENETSESSPAGEATASTS. In terms of domain architecture, Lon N-terminal spans 30 to 224; sequence LILLPVRNAV…KVLDAVAGRI (195 aa). ATP is bound at residue 376-383; the sequence is GPPGVGKT. The 182-residue stretch at 612–793 folds into the Lon proteolytic domain; the sequence is TSLPGVVTGL…DDAVREIIED (182 aa). Catalysis depends on residues Ser-699 and Lys-742.

This sequence belongs to the peptidase S16 family. In terms of assembly, homohexamer. Organized in a ring with a central cavity.

It is found in the cytoplasm. It carries out the reaction Hydrolysis of proteins in presence of ATP.. Functionally, ATP-dependent serine protease that mediates the selective degradation of mutant and abnormal proteins as well as certain short-lived regulatory proteins. Required for cellular homeostasis and for survival from DNA damage and developmental changes induced by stress. Degrades polypeptides processively to yield small peptide fragments that are 5 to 10 amino acids long. Binds to DNA in a double-stranded, site-specific manner. The sequence is that of Lon protease from Paraburkholderia phytofirmans (strain DSM 17436 / LMG 22146 / PsJN) (Burkholderia phytofirmans).